We begin with the raw amino-acid sequence, 481 residues long: Aspartyl/glutamyl-tRNA(Asn/Gln) amidotransferase subunit B (481 aa).

This sequence belongs to the GatB/GatE family. GatB subfamily. In terms of assembly, heterotrimer of A, B and C subunits.

It carries out the reaction L-glutamyl-tRNA(Gln) + L-glutamine + ATP + H2O = L-glutaminyl-tRNA(Gln) + L-glutamate + ADP + phosphate + H(+). It catalyses the reaction L-aspartyl-tRNA(Asn) + L-glutamine + ATP + H2O = L-asparaginyl-tRNA(Asn) + L-glutamate + ADP + phosphate + 2 H(+). Allows the formation of correctly charged Asn-tRNA(Asn) or Gln-tRNA(Gln) through the transamidation of misacylated Asp-tRNA(Asn) or Glu-tRNA(Gln) in organisms which lack either or both of asparaginyl-tRNA or glutaminyl-tRNA synthetases. The reaction takes place in the presence of glutamine and ATP through an activated phospho-Asp-tRNA(Asn) or phospho-Glu-tRNA(Gln). The sequence is that of Aspartyl/glutamyl-tRNA(Asn/Gln) amidotransferase subunit B from Pseudomonas putida (strain ATCC 700007 / DSM 6899 / JCM 31910 / BCRC 17059 / LMG 24140 / F1).